The following is a 175-amino-acid chain: Adenylyl-sulfate kinase (175 aa).

Residue 12–19 (GLSGAGKT) participates in ATP binding. The Phosphoserine intermediate role is filled by Ser-86.

Belongs to the APS kinase family.

It catalyses the reaction adenosine 5'-phosphosulfate + ATP = 3'-phosphoadenylyl sulfate + ADP + H(+). The protein operates within sulfur metabolism; hydrogen sulfide biosynthesis; sulfite from sulfate: step 2/3. Functionally, catalyzes the synthesis of activated sulfate. The polypeptide is Adenylyl-sulfate kinase (Synechococcus sp. (strain JA-2-3B'a(2-13)) (Cyanobacteria bacterium Yellowstone B-Prime)).